The primary structure comprises 192 residues: Phosphoheptose isomerase (192 aa).

Residues 37 to 192 (ITDSFKNGGK…MMLIEFEMAK (156 aa)) enclose the SIS domain. 52–54 (NGG) is a binding site for substrate. Zn(2+) contacts are provided by histidine 61 and glutamate 65. Substrate contacts are provided by residues glutamate 65, 93-94 (ND), 119-121 (STS), serine 124, and glutamine 172. 2 residues coordinate Zn(2+): glutamine 172 and histidine 180.

This sequence belongs to the SIS family. GmhA subfamily. As to quaternary structure, homotetramer. Zn(2+) serves as cofactor.

It is found in the cytoplasm. The enzyme catalyses 2 D-sedoheptulose 7-phosphate = D-glycero-alpha-D-manno-heptose 7-phosphate + D-glycero-beta-D-manno-heptose 7-phosphate. It participates in carbohydrate biosynthesis; D-glycero-D-manno-heptose 7-phosphate biosynthesis; D-glycero-alpha-D-manno-heptose 7-phosphate and D-glycero-beta-D-manno-heptose 7-phosphate from sedoheptulose 7-phosphate: step 1/1. Its function is as follows. Catalyzes the isomerization of sedoheptulose 7-phosphate in D-glycero-D-manno-heptose 7-phosphate. This chain is Phosphoheptose isomerase, found in Glaesserella parasuis serovar 5 (strain SH0165) (Haemophilus parasuis).